Reading from the N-terminus, the 519-residue chain is Acetylcholine receptor subunit gamma (519 aa).

A signal peptide spans 1-22; that stretch reads MHGGQGPQLLLLLLATCLGAQS. The Extracellular segment spans residues 23–240; sequence RNQEERLLAD…VVFYLLIQRK (218 aa). N-linked (GlcNAc...) asparagine glycosylation is found at asparagine 52 and asparagine 163. A disulfide bond links cysteine 150 and cysteine 164. Helical transmembrane passes span 241 to 265, 274 to 292, and 308 to 329; these read PLFYVINIIVPCVLISSVAILIYFL, CTVATNVLLAQTVFLFLVA, and YLTFLMVVTILIVVNSVVVLNV. Residues 330–476 lie on the Cytoplasmic side of the membrane; sequence SLRSPHTHSM…WLLVGRVLDR (147 aa). The helical transmembrane segment at 477 to 497 threads the bilayer; sequence VCFLAMLSLFICGTAGIFLMA.

It belongs to the ligand-gated ion channel (TC 1.A.9) family. Acetylcholine receptor (TC 1.A.9.1) subfamily. Gamma/CHRNG sub-subfamily. In terms of assembly, pentamer of two alpha chains, and one each of the beta, delta, and gamma (in immature muscle) or epsilon (in mature muscle) chains.

The protein resides in the postsynaptic cell membrane. It is found in the cell membrane. It catalyses the reaction K(+)(in) = K(+)(out). The catalysed reaction is Na(+)(in) = Na(+)(out). Functionally, after binding acetylcholine, the AChR responds by an extensive change in conformation that affects all subunits and leads to opening of an ion-conducting channel across the plasma membrane. The protein is Acetylcholine receptor subunit gamma (Chrng) of Rattus norvegicus (Rat).